The sequence spans 37 residues: Large ribosomal subunit protein bL36c (37 aa).

This sequence belongs to the bacterial ribosomal protein bL36 family.

It is found in the plastid. The protein resides in the chloroplast. This Cycas taitungensis (Prince sago) protein is Large ribosomal subunit protein bL36c.